We begin with the raw amino-acid sequence, 115 residues long: Dolichyl-diphosphooligosaccharide--protein glycosyltransferase subunit DAD1 (115 aa).

Topologically, residues 1–31 are cytoplasmic; the sequence is MARSTGKDAQALFHSLRSAYAATPTTLKIID. A helical membrane pass occupies residues 32 to 52; sequence LYVGFAVFTALIQVVYMAIVG. Over 53-55 the chain is Lumenal; it reads SFP. The helical transmembrane segment at 56–76 threads the bilayer; sequence FNSFLSGVLSCVGTAVLAVCL. Over 77 to 94 the chain is Cytoplasmic; the sequence is RIQVNKDNKEFKDLPPER. The helical transmembrane segment at 95–115 threads the bilayer; that stretch reads AFADFVLCNLVLHLVIMNFLG.

The protein belongs to the DAD/OST2 family. Component of the oligosaccharyltransferase (OST) complex.

It localises to the endoplasmic reticulum membrane. Its pathway is protein modification; protein glycosylation. Subunit of the oligosaccharyl transferase (OST) complex that catalyzes the initial transfer of a defined glycan (Glc(3)Man(9)GlcNAc(2) in eukaryotes) from the lipid carrier dolichol-pyrophosphate to an asparagine residue within an Asn-X-Ser/Thr consensus motif in nascent polypeptide chains, the first step in protein N-glycosylation. N-glycosylation occurs cotranslationally and the complex associates with the Sec61 complex at the channel-forming translocon complex that mediates protein translocation across the endoplasmic reticulum (ER). All subunits are required for a maximal enzyme activity. This Citrus unshiu (Satsuma mandarin) protein is Dolichyl-diphosphooligosaccharide--protein glycosyltransferase subunit DAD1 (DAD1).